We begin with the raw amino-acid sequence, 547 residues long: Sensor histidine kinase CitA (547 aa).

Residues 1–23 (MSIYPMYTRKITHWFARRSFQNR) are Cytoplasmic-facing. Residues 24 to 44 (IFLLILFTSTIVMLAMSWYLT) form a helical membrane-spanning segment. The Periplasmic portion of the chain corresponds to 45–180 (DITEERLHYQ…TIEQLENWLS (136 aa)). The citrate site is built by R109, H112, R150, and K152. Residues 181–201 (LQISSLLIPMAIMLLLLLFCA) form a helical membrane-spanning segment. Over 202 to 547 (RRFSLHIKKQ…IPLTRDEHHG (346 aa)) the chain is Cytoplasmic. Positions 225–264 (IQQSVLFESVFEGLIAIDSDYKITAINQTARRLLNLSQPE) constitute a PAS domain. Residues 347 to 542 (AVQHEHRNLI…IFTLYIPLTR (196 aa)) enclose the Histidine kinase domain. The residue at position 350 (H350) is a Phosphohistidine; by autocatalysis.

Homodimer. In vitro CitB and the CitA kinase domain form a complex, formation of which is enhanced by ATP. Post-translationally, autophosphorylated.

It is found in the cell inner membrane. It catalyses the reaction ATP + protein L-histidine = ADP + protein N-phospho-L-histidine.. Functionally, member of the two-component regulatory system CitA/CitB. Probably activates CitB by phosphorylation. The periplasmic domain binds H-citrate(2-), which is essential for induction of the citrate-fermentation genes. This is Sensor histidine kinase CitA (citA) from Klebsiella pneumoniae.